Consider the following 590-residue polypeptide: MLRSHAAGSLRPADAGQNVTLAGWVARRRDHGGVIFIDLRDASGVSQVVFREGAVLEAAHRLRAEFCVAVEGVVEVRPEGNENPEIPTGGIEVNATSLTVLGESAPLPFQLDDEAGEEARLKYRYLDLRREGPGKALRLRSKVNAAAREVLARHDFVEIETPTMTRSTPEGARDFLVPARLQPGSFYALPQSPQLFKQLLMVAGMERYYQIARCYRDEDFRADRQPEFTQLDMEMSFVDADDVIAVSEEILKALWALIGHDLPTPLPRITYAEAMHRFGTDKPDLRFGLELVECKEFFADTTFRVFQAPYVGAVVMPGGASQPRRTLDGWQEWAKQRGAKGLAYVLVGDDGTLGGPVAKNLTDAERDGLAAHVGANPGDCIFFAAGPPKSSRALLGAARIEIAKRLDMIDPDAWAFTWVVDWPLFEMAEDATAAGDVAVGSGAWTAVHHAFTAPQPQSEATFDTDPAGALADAYDIVCNGNEIGGGSIRIHRRDVQERVFAMMGIEHDEAQEKFGFLLDAFTFGAPPHGGIAFGWDRITALLARMDSIREVIAFPKSGGGADPLTGAPAPITPQQRRESGIDAKPKKDGE.

Residue Glu-170 participates in L-aspartate binding. The tract at residues 194–197 (QLFK) is aspartate. Arg-216 contributes to the L-aspartate binding site. Residues 216–218 (RDE) and Gln-225 contribute to the ATP site. His-448 lines the L-aspartate pocket. Position 482 (Glu-482) interacts with ATP. Residue Arg-489 coordinates L-aspartate. 534 to 537 (GWDR) is an ATP binding site. Residues 557–590 (SGGGADPLTGAPAPITPQQRRESGIDAKPKKDGE) form a disordered region. Basic and acidic residues predominate over residues 575–590 (QRRESGIDAKPKKDGE).

The protein belongs to the class-II aminoacyl-tRNA synthetase family. Type 1 subfamily. As to quaternary structure, homodimer.

The protein localises to the cytoplasm. It carries out the reaction tRNA(Asx) + L-aspartate + ATP = L-aspartyl-tRNA(Asx) + AMP + diphosphate. Its function is as follows. Aspartyl-tRNA synthetase with relaxed tRNA specificity since it is able to aspartylate not only its cognate tRNA(Asp) but also tRNA(Asn). Reaction proceeds in two steps: L-aspartate is first activated by ATP to form Asp-AMP and then transferred to the acceptor end of tRNA(Asp/Asn). The polypeptide is Aspartate--tRNA(Asp/Asn) ligase (Mycobacterium sp. (strain KMS)).